The following is a 558-amino-acid chain: Oligo-1,6-glucosidase (558 aa).

Ca(2+) contacts are provided by Asp-21, Asn-23, Asp-25, and Asp-29. Asp-199 (nucleophile) is an active-site residue. The active-site Proton donor is Glu-255.

Belongs to the glycosyl hydrolase 13 family.

The protein localises to the cytoplasm. The enzyme catalyses Hydrolysis of (1-&gt;6)-alpha-D-glucosidic linkages in some oligosaccharides produced from starch and glycogen by alpha-amylase, and in isomaltose.. This Bacillus cereus protein is Oligo-1,6-glucosidase (malL).